We begin with the raw amino-acid sequence, 339 residues long: Thermospermine synthase ACAULIS5 (339 aa).

The PABS domain maps to 33 to 270 (CHWYEETIDD…DTWGWVMASD (238 aa)). S-adenosyl 3-(methylsulfanyl)propylamine is bound by residues glutamine 62, glutamate 117, aspartate 137, and 168-169 (DA). Aspartate 186 (proton acceptor) is an active-site residue.

This sequence belongs to the spermidine/spermine synthase family. Highly expressed in stem internodes and roots. Lower levels in young seedlings before flowering and rosette leaves. Expressed in the vascular tissues. Restricted to procambial and/or provascular cells during primary root development and early leaves development.

It catalyses the reaction S-adenosyl 3-(methylsulfanyl)propylamine + spermidine = thermospermine + S-methyl-5'-thioadenosine + H(+). In terms of biological role, required for correct xylem specification through regulation of the lifetime of the xylem elements. Prevents premature death of the xylem vessel elements. This chain is Thermospermine synthase ACAULIS5 (ACL5), found in Arabidopsis thaliana (Mouse-ear cress).